The primary structure comprises 666 residues: ATP-dependent zinc metalloprotease FtsH (666 aa).

The Cytoplasmic segment spans residues 1-6; it reads MKSETG. A helical membrane pass occupies residues 7–27; that stretch reads YMGFVVVLVFMVLLALQLATL. Residues 28–116 are Periplasmic-facing; that stretch reads SAPATQIAYS…TRYRGADDDT (89 aa). A helical membrane pass occupies residues 117–137; that stretch reads WIGTLASWIVPIAVFALVWNL. Residues 138–666 are Cytoplasmic-facing; sequence MLRRPRGGLQ…ADNADHSVPQ (529 aa). 210 to 217 contributes to the ATP binding site; the sequence is GAPGTGKT. His432 serves as a coordination point for Zn(2+). Glu433 is an active-site residue. His436 and Asp509 together coordinate Zn(2+). A disordered region spans residues 612–666; the sequence is NDEPTPEPGARDPGGDAAKRSGIGAAPAKPPAEVGSAELRDPARKADNADHSVPQ. Basic and acidic residues-rich tracts occupy residues 620-630 and 649-666; these read GARDPGGDAAK and ELRD…SVPQ.

It in the central section; belongs to the AAA ATPase family. The protein in the C-terminal section; belongs to the peptidase M41 family. Homohexamer. Zn(2+) is required as a cofactor.

Its subcellular location is the cell inner membrane. Functionally, acts as a processive, ATP-dependent zinc metallopeptidase for both cytoplasmic and membrane proteins. Plays a role in the quality control of integral membrane proteins. This is ATP-dependent zinc metalloprotease FtsH from Burkholderia pseudomallei (strain 1710b).